The chain runs to 287 residues: Diphthine methyl ester synthase (287 aa).

S-adenosyl-L-methionine contacts are provided by residues L9, D84, G87, 112–113 (SI), V163, V221, and H248.

It belongs to the diphthine synthase family.

It localises to the cytoplasm. It catalyses the reaction 2-[(3S)-amino-3-carboxypropyl]-L-histidyl-[translation elongation factor 2] + 4 S-adenosyl-L-methionine = diphthine methyl ester-[translation elongation factor 2] + 4 S-adenosyl-L-homocysteine + 3 H(+). It functions in the pathway protein modification; peptidyl-diphthamide biosynthesis. Its function is as follows. S-adenosyl-L-methionine-dependent methyltransferase that catalyzes four methylations of the modified target histidine residue in translation elongation factor 2 (EF-2), to form an intermediate called diphthine methyl ester. The four successive methylation reactions represent the second step of diphthamide biosynthesis. This Gibberella zeae (strain ATCC MYA-4620 / CBS 123657 / FGSC 9075 / NRRL 31084 / PH-1) (Wheat head blight fungus) protein is Diphthine methyl ester synthase (DPH5).